The primary structure comprises 367 residues: 2-aminoethylphosphonate--pyruvate transaminase (367 aa).

Position 194 is an N6-(pyridoxal phosphate)lysine (K194).

The protein belongs to the class-V pyridoxal-phosphate-dependent aminotransferase family. PhnW subfamily. Homodimer. The cofactor is pyridoxal 5'-phosphate.

The enzyme catalyses (2-aminoethyl)phosphonate + pyruvate = phosphonoacetaldehyde + L-alanine. Involved in phosphonate degradation. This is 2-aminoethylphosphonate--pyruvate transaminase from Salmonella heidelberg (strain SL476).